A 458-amino-acid chain; its full sequence is Phosphoglucosamine mutase (458 aa).

Ser-109 functions as the Phosphoserine intermediate in the catalytic mechanism. Mg(2+) is bound by residues Ser-109, Asp-251, Asp-253, and Asp-255. A Phosphoserine modification is found at Ser-109.

Belongs to the phosphohexose mutase family. It depends on Mg(2+) as a cofactor. In terms of processing, activated by phosphorylation.

The catalysed reaction is alpha-D-glucosamine 1-phosphate = D-glucosamine 6-phosphate. Catalyzes the conversion of glucosamine-6-phosphate to glucosamine-1-phosphate. The protein is Phosphoglucosamine mutase of Myxococcus xanthus (strain DK1622).